The chain runs to 876 residues: Probable DNA-directed RNA polymerase catalytic subunit (876 aa).

This sequence belongs to the RNA polymerase beta chain family. Interacts with LEF-4, LEF-9, and p47.

The enzyme catalyses RNA(n) + a ribonucleoside 5'-triphosphate = RNA(n+1) + diphosphate. Functionally, component of the viral DNA-dependent RNA polymerase which is composed of four equimolar subunits of LEF-4, LEF-8, LEF-9, and p47. Plays an essential role in late and very late gene expression. The chain is Probable DNA-directed RNA polymerase catalytic subunit (LEF-8) from Autographa californica nuclear polyhedrosis virus (AcMNPV).